Here is a 156-residue protein sequence, read N- to C-terminus: RING finger protein 224 (156 aa).

Residues 24-71 (CIICCSAYDLSGHLPRRLYCGHTFCQACVRRLDTPAPEQRWIPCPQCR) form an RING-type zinc finger.

The chain is RING finger protein 224 (RNF224) from Homo sapiens (Human).